The following is a 380-amino-acid chain: PqqA peptide cyclase (380 aa).

Residues 8–223 enclose the Radical SAM core domain; sequence VNPPLWLLAE…VADYRQKMAA (216 aa). The [4Fe-4S] cluster site is built by Cys-22, Cys-26, and Cys-29.

The protein belongs to the radical SAM superfamily. PqqE family. As to quaternary structure, interacts with PqqD. The interaction is necessary for activity of PqqE. [4Fe-4S] cluster is required as a cofactor.

It carries out the reaction [PQQ precursor protein] + S-adenosyl-L-methionine = E-Y cross-linked-[PQQ precursor protein] + 5'-deoxyadenosine + L-methionine + H(+). It functions in the pathway cofactor biosynthesis; pyrroloquinoline quinone biosynthesis. Functionally, catalyzes the cross-linking of a glutamate residue and a tyrosine residue in the PqqA protein as part of the biosynthesis of pyrroloquinoline quinone (PQQ). The polypeptide is PqqA peptide cyclase (Klebsiella pneumoniae (strain 342)).